We begin with the raw amino-acid sequence, 182 residues long: CDP-diacylglycerol--glycerol-3-phosphate 3-phosphatidyltransferase (182 aa).

At 2–12 the chain is on the cytoplasmic side; that stretch reads QFNIPTLLTLF. A helical transmembrane segment spans residues 13-37; sequence RVILIPFFVVVFYLPFAWAPMVSAL. At 38–60 the chain is on the periplasmic side; sequence IFCIAAITDWFDGFLARRWNQST. Residues 61–81 traverse the membrane as a helical segment; sequence RFGAFLDPVADKVLVAIAMVL. Topologically, residues 82-86 are cytoplasmic; the sequence is VTEHY. Residues 87-107 form a helical membrane-spanning segment; the sequence is HSWWVTLPAATMIAREIIISA. The Periplasmic portion of the chain corresponds to 108–145; sequence LREWMAELGKRSSVAVSWIGKVKTTAQMVALAWLLWRP. Residues 146-168 form a helical membrane-spanning segment; that stretch reads NIWVEYAGIALFFVAAVLTLWSM. Over 169–181 the chain is Cytoplasmic; sequence LQYLSAARGDLLD.

Belongs to the CDP-alcohol phosphatidyltransferase class-I family.

The protein localises to the cell inner membrane. It catalyses the reaction a CDP-1,2-diacyl-sn-glycerol + sn-glycerol 3-phosphate = a 1,2-diacyl-sn-glycero-3-phospho-(1'-sn-glycero-3'-phosphate) + CMP + H(+). Its pathway is phospholipid metabolism; phosphatidylglycerol biosynthesis; phosphatidylglycerol from CDP-diacylglycerol: step 1/2. Its function is as follows. Catalyzes the conversion of cytidine diphosphate diacylglycerol (CDP-DG) and glycerol 3-phosphate into phosphatidylglycerol. Essential for the synthesis of anionic phospholipids, thereby playing a role in balancing the ratio of zwitterionic and anionic phospholipids, which is thought to be important for normal membrane function. This chain is CDP-diacylglycerol--glycerol-3-phosphate 3-phosphatidyltransferase, found in Salmonella paratyphi A (strain ATCC 9150 / SARB42).